Consider the following 140-residue polypeptide: ATP synthase epsilon chain (140 aa).

Belongs to the ATPase epsilon chain family. In terms of assembly, F-type ATPases have 2 components, CF(1) - the catalytic core - and CF(0) - the membrane proton channel. CF(1) has five subunits: alpha(3), beta(3), gamma(1), delta(1), epsilon(1). CF(0) has three main subunits: a, b and c.

It localises to the cell inner membrane. Its function is as follows. Produces ATP from ADP in the presence of a proton gradient across the membrane. The sequence is that of ATP synthase epsilon chain from Xylella fastidiosa (strain Temecula1 / ATCC 700964).